The following is a 104-amino-acid chain: N(2)-fixation sustaining protein CowN (104 aa).

It belongs to the CowN family.

Its function is as follows. Is required to sustain N(2)-dependent growth in the presence of low levels of carbon monoxide (CO). Probably acts by protecting the N(2) fixation ability of the nitrogenase complex, which is inactivated in the presence of CO. This is N(2)-fixation sustaining protein CowN from Arcobacter nitrofigilis (strain ATCC 33309 / DSM 7299 / CCUG 15893 / LMG 7604 / NCTC 12251 / CI) (Campylobacter nitrofigilis).